The primary structure comprises 796 residues: Molybdenum cofactor sulfurase (796 aa).

N6-(pyridoxal phosphate)lysine is present on lysine 246. Cysteine 418 is a catalytic residue. One can recognise an MOSC domain in the interval 650 to 796; sequence LRLLRQSSQR…LTCGDVVVVT (147 aa). Serine 752 is subject to Phosphoserine.

Belongs to the class-V pyridoxal-phosphate-dependent aminotransferase family. MOCOS subfamily. It depends on pyridoxal 5'-phosphate as a cofactor.

It catalyses the reaction Mo-molybdopterin + L-cysteine + AH2 = thio-Mo-molybdopterin + L-alanine + A + H2O. Functionally, sulfurates the molybdenum cofactor. Sulfation of molybdenum is essential for xanthine dehydrogenase (XDH) and aldehyde oxidase (ADO) enzymes in which molybdenum cofactor is liganded by 1 oxygen and 1 sulfur atom in active form. In Drosophila persimilis (Fruit fly), this protein is Molybdenum cofactor sulfurase.